The chain runs to 79 residues: Small ribosomal subunit protein uS17 (79 aa).

The protein belongs to the universal ribosomal protein uS17 family. As to quaternary structure, part of the 30S ribosomal subunit.

In terms of biological role, one of the primary rRNA binding proteins, it binds specifically to the 5'-end of 16S ribosomal RNA. This Bartonella henselae (strain ATCC 49882 / DSM 28221 / CCUG 30454 / Houston 1) (Rochalimaea henselae) protein is Small ribosomal subunit protein uS17.